Reading from the N-terminus, the 373-residue chain is Chaperone protein DnaJ (373 aa).

The J domain maps to 4–68; it reads NYYQILGVSK…QTRAAYDRLG (65 aa). The CR-type zinc finger occupies 136 to 214; that stretch reads GIEKNISFSS…CHGMGRYHKQ (79 aa). 8 residues coordinate Zn(2+): cysteine 149, cysteine 152, cysteine 166, cysteine 169, cysteine 188, cysteine 191, cysteine 202, and cysteine 205. 4 CXXCXGXG motif repeats span residues 149-156, 166-173, 188-195, and 202-209; these read CDTCHGSG, CDACSGVG, CHKCQGNG, and CKKCHGMG.

This sequence belongs to the DnaJ family. As to quaternary structure, homodimer. The cofactor is Zn(2+).

The protein resides in the cytoplasm. Functionally, participates actively in the response to hyperosmotic and heat shock by preventing the aggregation of stress-denatured proteins and by disaggregating proteins, also in an autonomous, DnaK-independent fashion. Unfolded proteins bind initially to DnaJ; upon interaction with the DnaJ-bound protein, DnaK hydrolyzes its bound ATP, resulting in the formation of a stable complex. GrpE releases ADP from DnaK; ATP binding to DnaK triggers the release of the substrate protein, thus completing the reaction cycle. Several rounds of ATP-dependent interactions between DnaJ, DnaK and GrpE are required for fully efficient folding. Also involved, together with DnaK and GrpE, in the DNA replication of plasmids through activation of initiation proteins. This is Chaperone protein DnaJ from Rickettsia peacockii (strain Rustic).